The chain runs to 112 residues: Tyrosine-protein phosphatase 7 (112 aa).

The Tyrosine-protein phosphatase domain occupies 1-112; that stretch reads NNVTIIVMIT…SSPESGPIVV (112 aa). Substrate is bound at residue D82.

Belongs to the protein-tyrosine phosphatase family.

The enzyme catalyses O-phospho-L-tyrosyl-[protein] + H2O = L-tyrosyl-[protein] + phosphate. The sequence is that of Tyrosine-protein phosphatase 7 (STY-7) from Styela plicata (Wrinkled sea squirt).